Consider the following 172-residue polypeptide: Mesogenin-1 (172 aa).

The tract at residues 1 to 69 is disordered; sequence METLHHPLVK…SPYSSSSHTQ (69 aa). Polar residues predominate over residues 18–29; it reads SSDSEPNSSCMA. Residues 42 to 66 are compositionally biased toward low complexity; it reads SLSQTPSPQSLSPAVSYESPYSSSS. Residues 108–162 enclose the bHLH domain; it reads QRRRKASEREKLRMRAIAEALHTLRNNLPPMYSQGRQPLTKIQTLKCTINYISEL.

The protein resides in the nucleus. In terms of biological role, involved in specifying the paraxial, but not dorsal, mesoderm. May regulate the expression of T-box transcription factors required for mesoderm formation and differentiation, such as brachyury T, wnt8, vegt and eomes. The chain is Mesogenin-1 (msgn1) from Xenopus tropicalis (Western clawed frog).